We begin with the raw amino-acid sequence, 454 residues long: Probable succinate-semialdehyde dehydrogenase [NADP(+)] (454 aa).

Residues 130-131 (WN), 154-157 (KHAS), and 206-207 (GS) contribute to the NADP(+) site. The active-site Proton acceptor is the Glu-228. Leu-229 serves as a coordination point for NADP(+). The active-site Nucleophile is Cys-262. Residue Glu-359 participates in NADP(+) binding.

It belongs to the aldehyde dehydrogenase family.

It catalyses the reaction succinate semialdehyde + NADP(+) + H2O = succinate + NADPH + 2 H(+). It functions in the pathway amino-acid degradation; 4-aminobutanoate degradation. In terms of biological role, catalyzes the NADP(+) dependent oxidation of succinate semialdehyde to succinate. In Synechocystis sp. (strain ATCC 27184 / PCC 6803 / Kazusa), this protein is Probable succinate-semialdehyde dehydrogenase [NADP(+)] (gabD).